We begin with the raw amino-acid sequence, 85 residues long: UPF0473 protein CPR_1590 (85 aa).

It belongs to the UPF0473 family.

This chain is UPF0473 protein CPR_1590, found in Clostridium perfringens (strain SM101 / Type A).